The chain runs to 241 residues: Uridylate kinase (241 aa).

An ATP-binding site is contributed by 14–17; it reads KLSG. UMP is bound at residue Gly-56. Positions 57 and 61 each coordinate ATP. Residues Asp-77 and 138–145 contribute to the UMP site; that span reads TGNPFFTT. ATP is bound by residues Thr-165, Tyr-171, and Asp-174.

Belongs to the UMP kinase family. Homohexamer.

It is found in the cytoplasm. It catalyses the reaction UMP + ATP = UDP + ADP. It participates in pyrimidine metabolism; CTP biosynthesis via de novo pathway; UDP from UMP (UMPK route): step 1/1. Inhibited by UTP. In terms of biological role, catalyzes the reversible phosphorylation of UMP to UDP. This is Uridylate kinase from Psychrobacter arcticus (strain DSM 17307 / VKM B-2377 / 273-4).